The sequence spans 493 residues: 3-octaprenyl-4-hydroxybenzoate carboxy-lyase (493 aa).

Mn(2+) is bound at residue Asn172. Prenylated FMN is bound by residues 175–177 (IYR), 189–191 (RWL), and 194–195 (RG). Glu238 is a binding site for Mn(2+). The active-site Proton donor is Asp287.

Belongs to the UbiD family. Homohexamer. It depends on prenylated FMN as a cofactor. Mn(2+) serves as cofactor.

The protein localises to the cell membrane. The catalysed reaction is a 4-hydroxy-3-(all-trans-polyprenyl)benzoate + H(+) = a 2-(all-trans-polyprenyl)phenol + CO2. The protein operates within cofactor biosynthesis; ubiquinone biosynthesis. Its function is as follows. Catalyzes the decarboxylation of 3-octaprenyl-4-hydroxy benzoate to 2-octaprenylphenol, an intermediate step in ubiquinone biosynthesis. The sequence is that of 3-octaprenyl-4-hydroxybenzoate carboxy-lyase from Shewanella pealeana (strain ATCC 700345 / ANG-SQ1).